Here is a 761-residue protein sequence, read N- to C-terminus: Mitochondrial intermediate peptidase 1 (761 aa).

Position 530 (H530) interacts with Zn(2+). Residue E531 is part of the active site. Zn(2+) contacts are provided by H534 and H537.

This sequence belongs to the peptidase M3 family. Zn(2+) is required as a cofactor.

The protein resides in the mitochondrion matrix. The catalysed reaction is Release of an N-terminal octapeptide as second stage of processing of some proteins imported into the mitochondrion.. Cleaves proteins, imported into the mitochondrion, to their mature size. While most mitochondrial precursor proteins are processed to the mature form in one step by mitochondrial processing peptidase (MPP), the sequential cleavage by MIP of an octapeptide after initial processing by MPP is a required step for a subgroup of nuclear-encoded precursor proteins destined for the matrix or the inner membrane. This Cryptococcus neoformans var. neoformans serotype D (strain B-3501A) (Filobasidiella neoformans) protein is Mitochondrial intermediate peptidase 1 (OCT1).